A 322-amino-acid chain; its full sequence is MRILAILLPILISFFISYITTVWVIRQAKKSRFVGKDINKPDKPEIPLLGGIGIIAGFIAGSFSLLLTDVRSERVIPAVILSSLLIAFLGLLDDIFNVRQSVRAFLPIFASVPLIVYSVGHSIISIPFLGPINFGIFYYIIIIPFALTITSNAFNMLEGLNGLGVGMGIIMLSALAYIGLTHTGPTYQAGLIALSAIFSLSAFLIFNKYPAKIFPGNVGTYFIGALIGAIGIAGFMYTALAILYIPYVVEFILKLRTNFKGVSFGKVDSSGRLYWDEKPHSLTHIVMKMGRFKEYQVVIILWGMEAIFAVIAVILQTTTIVI.

The next 9 helical transmembrane spans lie at 5–25 (AILL…VWVI), 46–66 (IPLL…FSLL), 76–96 (IPAV…DDIF), 102–122 (VRAF…VGHS), 123–143 (IISI…IIII), 160–180 (LNGL…YIGL), 186–206 (TYQA…FLIF), 222–242 (FIGA…ALAI), and 295–315 (YQVV…AVIL).

This sequence belongs to the glycosyltransferase 4 family.

It localises to the cell membrane. The catalysed reaction is a di-trans,poly-cis-dolichyl phosphate + UDP-N-acetyl-alpha-D-glucosamine = an N-acetyl-alpha-D-glucosaminyl-diphospho-di-trans,poly-cis-dolichol + UMP. Its activity is regulated as follows. Inhibited by tunicamycin. The protein is Putative UDP-N-acetylglucosamine--dolichyl-phosphate N-acetylglucosaminephosphotransferase (gnpTA) of Saccharolobus solfataricus (strain ATCC 35092 / DSM 1617 / JCM 11322 / P2) (Sulfolobus solfataricus).